We begin with the raw amino-acid sequence, 93 residues long: uncharacterized protein (93 aa).

An N-terminal signal peptide occupies residues 1–11; the sequence is MALMVLMALVG. Cys12 is lipidated: N-palmitoyl cysteine. The S-diacylglycerol cysteine moiety is linked to residue Cys12.

Its subcellular location is the cell membrane. This is an uncharacterized protein from Escherichia coli O6:K15:H31 (strain 536 / UPEC).